The primary structure comprises 184 residues: ADP-ribosylation factor-like protein 8b (184 aa).

The note=Mediates targeting to membranes intramembrane region spans 1–18; the sequence is MGLWDALLNWLRSLFFKQ. GTP is bound by residues 29 to 34, 48 to 51, 70 to 74, and 129 to 132; these read NAGKTS, MIPT, DLGGQ, and NKID.

It belongs to the small GTPase superfamily. Arf family. As to quaternary structure, interacts with tubulin.

It is found in the late endosome membrane. The protein resides in the lysosome membrane. The protein localises to the cytoplasm. Its subcellular location is the cytoskeleton. It localises to the spindle. May play a role in lysosome motility. May play a role in chromosome segregation. Functionally, (Microbial infection) Component of tomato mosaic virus (ToMV) RNA replication complexes. Required for tobamovirus multiplication, especially for efficient negative-strand RNA synthesis and viral RNA capping. This is ADP-ribosylation factor-like protein 8b from Arabidopsis thaliana (Mouse-ear cress).